The chain runs to 186 residues: Threonylcarbamoyl-AMP synthase (186 aa).

Positions Val2–Gly186 constitute a YrdC-like domain.

Belongs to the SUA5 family. TsaC subfamily.

Its subcellular location is the cytoplasm. It catalyses the reaction L-threonine + hydrogencarbonate + ATP = L-threonylcarbamoyladenylate + diphosphate + H2O. Required for the formation of a threonylcarbamoyl group on adenosine at position 37 (t(6)A37) in tRNAs that read codons beginning with adenine. Catalyzes the conversion of L-threonine, HCO(3)(-)/CO(2) and ATP to give threonylcarbamoyl-AMP (TC-AMP) as the acyladenylate intermediate, with the release of diphosphate. This Vibrio vulnificus (strain CMCP6) protein is Threonylcarbamoyl-AMP synthase.